The following is a 158-amino-acid chain: Ribosome maturation factor RimP (158 aa).

Belongs to the RimP family.

The protein resides in the cytoplasm. Required for maturation of 30S ribosomal subunits. In Streptococcus suis (strain 05ZYH33), this protein is Ribosome maturation factor RimP.